The primary structure comprises 166 residues: NAD(P)H-quinone oxidoreductase subunit I, chloroplastic (166 aa).

2 4Fe-4S ferredoxin-type domains span residues 55-84 (GRIH…VDWK) and 95-124 (LNYS…MTEE). Cysteine 64, cysteine 67, cysteine 70, cysteine 74, cysteine 104, cysteine 107, cysteine 110, and cysteine 114 together coordinate [4Fe-4S] cluster.

Belongs to the complex I 23 kDa subunit family. As to quaternary structure, NDH is composed of at least 16 different subunits, 5 of which are encoded in the nucleus. [4Fe-4S] cluster serves as cofactor.

Its subcellular location is the plastid. The protein resides in the chloroplast thylakoid membrane. The enzyme catalyses a plastoquinone + NADH + (n+1) H(+)(in) = a plastoquinol + NAD(+) + n H(+)(out). The catalysed reaction is a plastoquinone + NADPH + (n+1) H(+)(in) = a plastoquinol + NADP(+) + n H(+)(out). NDH shuttles electrons from NAD(P)H:plastoquinone, via FMN and iron-sulfur (Fe-S) centers, to quinones in the photosynthetic chain and possibly in a chloroplast respiratory chain. The immediate electron acceptor for the enzyme in this species is believed to be plastoquinone. Couples the redox reaction to proton translocation, and thus conserves the redox energy in a proton gradient. This chain is NAD(P)H-quinone oxidoreductase subunit I, chloroplastic, found in Chaetymenia peduncularis (Daisy).